The following is a 1139-amino-acid chain: Phospholipid-transporting ATPase tat-1 (1139 aa).

Helical transmembrane passes span 78–98, 276–296, and 318–338; these read YTTA…EIFE, IIFL…GSEI, and SFLW…PISL. The active-site 4-aspartylphosphate intermediate is D388. Transmembrane regions (helical) follow at residues 831-851, 855-875, 901-921, 935-955, 972-992, and 1013-1033; these read ICLY…GQTI, WTIG…LGLF, IGNF…LFFL, GLTG…VATV, VACI…SLVF, and YTFW…DLVI.

It belongs to the cation transport ATPase (P-type) (TC 3.A.3) family. Type IV subfamily.

The protein localises to the cell membrane. The protein resides in the early endosome membrane. Its subcellular location is the recycling endosome membrane. It carries out the reaction ATP + H2O + phospholipidSide 1 = ADP + phosphate + phospholipidSide 2.. The catalysed reaction is a 1,2-diacyl-sn-glycero-3-phospho-L-serine(out) + ATP + H2O = a 1,2-diacyl-sn-glycero-3-phospho-L-serine(in) + ADP + phosphate + H(+). Transports phosphatidylserine from the outer to the inner leaflet of the plasma membrane, thereby maintaining the enrichment of this phospholipid in the inner leaflet. Ectopic exposure of phosphatidylserine on the cell surface may result in removal of living cells by neighboring phagocytes. Regulation of the phosphatidylserine distribution in plasma membranes is likely to help in the maintenance and control of the membrane surface charge. Plays a role in the formation of the tubular membrane structure and in membrane trafficking and is specifically involved in the recycling and degradation of endocytic cargo, likely with its chaperone protein chat-1. The protein is Phospholipid-transporting ATPase tat-1 (tat-1) of Caenorhabditis elegans.